A 93-amino-acid polypeptide reads, in one-letter code: Aspartyl/glutamyl-tRNA(Asn/Gln) amidotransferase subunit C (93 aa).

It belongs to the GatC family. In terms of assembly, heterotrimer of A, B and C subunits.

It carries out the reaction L-glutamyl-tRNA(Gln) + L-glutamine + ATP + H2O = L-glutaminyl-tRNA(Gln) + L-glutamate + ADP + phosphate + H(+). The catalysed reaction is L-aspartyl-tRNA(Asn) + L-glutamine + ATP + H2O = L-asparaginyl-tRNA(Asn) + L-glutamate + ADP + phosphate + 2 H(+). Allows the formation of correctly charged Asn-tRNA(Asn) or Gln-tRNA(Gln) through the transamidation of misacylated Asp-tRNA(Asn) or Glu-tRNA(Gln) in organisms which lack either or both of asparaginyl-tRNA or glutaminyl-tRNA synthetases. The reaction takes place in the presence of glutamine and ATP through an activated phospho-Asp-tRNA(Asn) or phospho-Glu-tRNA(Gln). The sequence is that of Aspartyl/glutamyl-tRNA(Asn/Gln) amidotransferase subunit C from Helicobacter pylori (strain HPAG1).